Here is a 473-residue protein sequence, read N- to C-terminus: Cysteine--tRNA ligase (473 aa).

C28 contacts Zn(2+). A 'HIGH' region motif is present at residues M30–H40. 3 residues coordinate Zn(2+): C209, H234, and E238. Positions K282–S286 match the 'KMSKS' region motif. K285 contacts ATP.

It belongs to the class-I aminoacyl-tRNA synthetase family. As to quaternary structure, monomer. The cofactor is Zn(2+).

The protein resides in the cytoplasm. It catalyses the reaction tRNA(Cys) + L-cysteine + ATP = L-cysteinyl-tRNA(Cys) + AMP + diphosphate. The protein is Cysteine--tRNA ligase of Neisseria gonorrhoeae (strain ATCC 700825 / FA 1090).